The following is a 425-amino-acid chain: Ribosome biogenesis protein WDR12 homolog (425 aa).

The segment at Leu13–Glu94 is ubiquitin-like (UBL) domain. WD repeat units follow at residues Leu106–Ile143, Gly145–Glu187, Gly194–Asp233, Gly258–Glu296, Ser298–Val337, Gly343–Phe383, and Gly387–Lys425. Residues Val227–Gly247 are disordered.

This sequence belongs to the WD repeat WDR12/YTM1 family.

It is found in the nucleus. The protein localises to the nucleolus. The protein resides in the nucleoplasm. In terms of biological role, required for maturation of ribosomal RNAs and formation of the large ribosomal subunit. This Culex quinquefasciatus (Southern house mosquito) protein is Ribosome biogenesis protein WDR12 homolog.